A 166-amino-acid chain; its full sequence is Protein adg1 (166 aa).

A signal peptide spans 1–22 (MFLRSIFQTLCAVSFLAGSVFA).

The protein resides in the endoplasmic reticulum. The chain is Protein adg1 (adg1) from Schizosaccharomyces pombe (strain 972 / ATCC 24843) (Fission yeast).